Consider the following 132-residue polypeptide: Ribonuclease VapC (132 aa).

One can recognise a PINc domain in the interval 4 to 123 (YMLDTNIVIY…SNNLREFERV (120 aa)). Mg(2+)-binding residues include aspartate 7 and aspartate 98.

It belongs to the PINc/VapC protein family. Probably forms a complex with cognate antitoxin VapB2. Requires Mg(2+) as cofactor.

Its function is as follows. Toxic component of a type II toxin-antitoxin (TA) system. Acts as an RNase. Its toxic effect is neutralized by cognate antitoxin VapB2 but not by non-cognate antitoxin VapB1. This chain is Ribonuclease VapC, found in Haemophilus influenzae (strain 86-028NP).